Here is a 550-residue protein sequence, read N- to C-terminus: MKEAELNRDVAKFCTDNQCVILQPQGLGPKSAAPMAPRTLRHVQAIVALVVVTVFFSLLALFVVVLQPWRQKQNEDHPVKAGLHGGNYSGSDNCSQFVRRAEMQEAIQSLRASGNSSSCHKEIQTLKYQMDNVSSQVQLLGGHLEEANADIQQAKDVLKGTGALASETQALRSSLEVASADIHSLRGDLEKANAMTSQTQGLLKSSTDNTSAELHVLGRGLEEAQSEIQALRGSLQSSNDLGSRTQNFLQHSMDNISAEIQAMRDGMQRAGEEMTSLKKDLETLTAQIQNANGHLEQTDTQIQGLKAQLKSTSSLNSQIEVVNGKLKDSSRELQTLRRDLSDVSALKSNVQMLQSNLQKAKAEVQSLKTGLEATKTLAAKIQGQQSDLEALQKAVAAHTQGQKTQNQVLQLIMQDWKYFNGKFYYFSRDKKSWHEAENFCVSQGAHLASVTSQEEQAFLVQITNAVDHWIGLTDQGTEGNWRWVDGTPFDYVQSRRFWRKGQPDNWRHGNGEREDCVHLQRMWNDMACGTAYNWVCKKSTDWSVARTDQS.

The Cytoplasmic segment spans residues 1 to 42 (MKEAELNRDVAKFCTDNQCVILQPQGLGPKSAAPMAPRTLRH). Residues 43-69 (VQAIVALVVVTVFFSLLALFVVVLQPW) form a helical; Signal-anchor for type II membrane protein membrane-spanning segment. Residues 70 to 550 (RQKQNEDHPV…DWSVARTDQS (481 aa)) lie on the Extracellular side of the membrane. 6 N-linked (GlcNAc...) asparagine glycosylation sites follow: N87, N93, N115, N132, N209, and N255. A C-type lectin domain is found at 438–538 (NFCVSQGAHL…GTAYNWVCKK (101 aa)). 2 cysteine pairs are disulfide-bonded: C440–C536 and C516–C528.

In terms of tissue distribution, kupffer cells.

The protein resides in the membrane. In terms of biological role, receptor with an affinity for galactose and fucose. Could be involved in endocytosis. The protein is C-type lectin domain family 4 member F (Clec4f) of Rattus norvegicus (Rat).